The following is a 356-amino-acid chain: Glycerol-1-phosphate dehydrogenase [NAD(P)+] (356 aa).

NAD(+)-binding positions include 103–107 (GRSID) and 125–128 (TAAS). Asp-130 is a binding site for substrate. Ser-134 contacts NAD(+). Position 177 (Asp-177) interacts with substrate. Zn(2+)-binding residues include Asp-177 and His-257. His-261 contributes to the substrate binding site. Residue His-273 participates in Zn(2+) binding.

Belongs to the glycerol-1-phosphate dehydrogenase family. It depends on Zn(2+) as a cofactor.

It localises to the cytoplasm. The enzyme catalyses sn-glycerol 1-phosphate + NAD(+) = dihydroxyacetone phosphate + NADH + H(+). It carries out the reaction sn-glycerol 1-phosphate + NADP(+) = dihydroxyacetone phosphate + NADPH + H(+). It functions in the pathway membrane lipid metabolism; glycerophospholipid metabolism. Catalyzes the NAD(P)H-dependent reduction of dihydroxyacetonephosphate (DHAP or glycerone phosphate) to glycerol 1-phosphate (G1P). The G1P thus generated is used as the glycerophosphate backbone of phospholipids in the cellular membranes of Archaea. This is Glycerol-1-phosphate dehydrogenase [NAD(P)+] from Methanosarcina barkeri (strain Fusaro / DSM 804).